The following is a 458-amino-acid chain: Argininosuccinate lyase (458 aa).

This sequence belongs to the lyase 1 family. Argininosuccinate lyase subfamily.

The protein localises to the cytoplasm. It carries out the reaction 2-(N(omega)-L-arginino)succinate = fumarate + L-arginine. The protein operates within amino-acid biosynthesis; L-arginine biosynthesis; L-arginine from L-ornithine and carbamoyl phosphate: step 3/3. This Buchnera aphidicola subsp. Baizongia pistaciae (strain Bp) protein is Argininosuccinate lyase.